A 248-amino-acid polypeptide reads, in one-letter code: Probable cyclic nucleotide phosphodiesterase CBUA0032 (248 aa).

Positions 13, 15, 52, 82, 152, 191, and 193 each coordinate Fe cation. AMP is bound by residues histidine 15, aspartate 52, and 82–83 (NH). An AMP-binding site is contributed by histidine 193.

Belongs to the cyclic nucleotide phosphodiesterase class-III family. Fe(2+) serves as cofactor.

The protein is Probable cyclic nucleotide phosphodiesterase CBUA0032 of Coxiella burnetii (strain RSA 493 / Nine Mile phase I).